The chain runs to 1358 residues: DNA-directed RNA polymerase subunit beta (1358 aa).

The protein belongs to the RNA polymerase beta chain family. In terms of assembly, the RNAP catalytic core consists of 2 alpha, 1 beta, 1 beta' and 1 omega subunit. When a sigma factor is associated with the core the holoenzyme is formed, which can initiate transcription.

It carries out the reaction RNA(n) + a ribonucleoside 5'-triphosphate = RNA(n+1) + diphosphate. DNA-dependent RNA polymerase catalyzes the transcription of DNA into RNA using the four ribonucleoside triphosphates as substrates. This Francisella tularensis subsp. holarctica (strain FTNF002-00 / FTA) protein is DNA-directed RNA polymerase subunit beta.